Consider the following 66-residue polypeptide: MPKLKTKSGAKKRFKVTATGKVMSAQRGKRHGMIKRTKKQIRQLRGTRAIFKTDGDNIKKYFLPNA.

Positions 22 to 41 (VMSAQRGKRHGMIKRTKKQI) are disordered. Over residues 27-41 (RGKRHGMIKRTKKQI) the composition is skewed to basic residues.

Belongs to the bacterial ribosomal protein bL35 family.

This Rhodopseudomonas palustris (strain TIE-1) protein is Large ribosomal subunit protein bL35.